The following is a 53-amino-acid chain: Large ribosomal subunit protein uL30 (53 aa).

The protein belongs to the universal ribosomal protein uL30 family. Part of the 50S ribosomal subunit.

This is Large ribosomal subunit protein uL30 from Deinococcus geothermalis (strain DSM 11300 / CIP 105573 / AG-3a).